Consider the following 385-residue polypeptide: MECEEVQAIVIDNGSSVCKAGFGGDDAPRTAFPSIVGRPRCTGFIVDMDKKDSYFCKKNSCFMGQKDLYIGDEAQSKRGILNVKYPIERGIITNWNDMEEIWYHTFYNELHVAPEEHPVLLTEPPLNPKANREKMTQIMFETFKTPAIYVANQGVLSLYSTGLTTGIVMNSGDGVSHTVPVYEGYILRQAILSLDLAGRDLTDYMNELLTDRGYYFTTKGEKEIVRGIKEKLSYVALDFEAEMQIASASPALEKSYELPDGQVITIGNERFRCPEALFRPYTGIHETIYNSIMKCDDDIRKDLFGSVVLSGGSTMFPGIVDRMNKELTALAPSTMKIKIIAPPERKYSVWIGGSILASLSSFQPRWISKEEYDESGPSIVHRKCF.

The protein belongs to the actin family.

Its subcellular location is the cytoplasm. It localises to the cytoskeleton. It carries out the reaction ATP + H2O = ADP + phosphate + H(+). Actins are highly conserved proteins that are involved in various types of cell motility and are ubiquitously expressed in all eukaryotic cells. Multiple isoforms are involved in various cellular functions such as cytoskeleton structure, cell mobility, chromosome movement and muscle contraction. This Dictyostelium discoideum (Social amoeba) protein is Putative actin-25 (act25).